The following is a 207-amino-acid chain: Probable nicotinate-nucleotide adenylyltransferase (207 aa).

Belongs to the NadD family.

The catalysed reaction is nicotinate beta-D-ribonucleotide + ATP + H(+) = deamido-NAD(+) + diphosphate. The protein operates within cofactor biosynthesis; NAD(+) biosynthesis; deamido-NAD(+) from nicotinate D-ribonucleotide: step 1/1. Its function is as follows. Catalyzes the reversible adenylation of nicotinate mononucleotide (NaMN) to nicotinic acid adenine dinucleotide (NaAD). In Desulfitobacterium hafniense (strain DSM 10664 / DCB-2), this protein is Probable nicotinate-nucleotide adenylyltransferase.